A 974-amino-acid polypeptide reads, in one-letter code: Exocyst complex component 4 (974 aa).

Residue Ala2 is modified to N-acetylalanine. Residue Lys9 is modified to N6-acetyllysine. Phosphoserine is present on residues Ser32 and Ser226. A coiled-coil region spans residues 32 to 114; sequence STSDDVEDRE…HCKRDELRKL (83 aa). Phosphothreonine is present on residues Thr233 and Thr237. Ser468 is subject to Phosphoserine.

Belongs to the SEC8 family. The exocyst complex is composed of EXOC1, EXOC2, EXOC3, EXOC4, EXOC5, EXOC6, EXOC7 and EXOC8. Interacts with BIRC6/bruce. Interacts with MYRIP. Interacts with SH3BP1; required for the localization of both SH3BP1 and the exocyst to the leading edge of migrating cells. Interacts with SLC6A9.

Its subcellular location is the midbody. It is found in the midbody ring. The protein localises to the cell projection. The protein resides in the cytoplasm. It localises to the cytoskeleton. Its subcellular location is the microtubule organizing center. It is found in the centrosome. In terms of biological role, component of the exocyst complex involved in the docking of exocytic vesicles with fusion sites on the plasma membrane. In Homo sapiens (Human), this protein is Exocyst complex component 4 (EXOC4).